A 131-amino-acid chain; its full sequence is MNHRVQPIIAVLIALGAFGFLYVLVTNPGEMAKMAVTVIVAGIIIYFIVKYVMNRNAGSEGAAFKKAAKQSRRRMKEQKAKHRAGHKGRVSHLRSVPSASKPKPMILKKKSQTQLTVIEGKKNKKKNRALF.

The next 2 helical transmembrane spans lie at 5–25 (VQPI…YVLV) and 34–54 (MAVT…YVMN). Residues 62-131 (AAFKKAAKQS…KNKKKNRALF (70 aa)) form a disordered region. 2 stretches are compositionally biased toward basic residues: residues 66-92 (KAAK…RVSH) and 122-131 (KNKKKNRALF).

The protein resides in the cell membrane. This is an uncharacterized protein from Bacillus subtilis (strain 168).